The primary structure comprises 252 residues: H-2 class II histocompatibility antigen, A-F beta chain (252 aa).

The first 16 residues, 1–16, serve as a signal peptide directing secretion; the sequence is AAVVVLMVLSSPGTEG. Residues 17-109 form a beta-1 region; the sequence is GNSERHFVSQ…VETPTSLRRL (93 aa). Over 17-213 the chain is Extracellular; that stretch reads GNSERHFVSQ…RAQSESARSK (197 aa). Cystine bridges form between cysteine 31–cysteine 93 and cysteine 132–cysteine 188. A glycan (N-linked (GlcNAc...) asparagine) is linked at asparagine 35. Positions 110–203 are beta-2; the sequence is EQPNVVISLS…SLKSPITVEW (94 aa). One can recognise an Ig-like C1-type domain in the interval 112-200; that stretch reads PNVVISLSRT…EHPSLKSPIT (89 aa). The interval 204–213 is connecting peptide; sequence RAQSESARSK. Residues 214-234 form a helical membrane-spanning segment; sequence MLSGIGGCVLGVIFLGLGLFI. Residues 235–252 are Cytoplasmic-facing; the sequence is RYRSQKGPRGPPPAGLLQ.

Belongs to the MHC class II family. Ubiquitinated in immature dendritic cells leading to down-regulation of MHC class II.

It localises to the membrane. This Mus musculus (Mouse) protein is H-2 class II histocompatibility antigen, A-F beta chain (H2-Ab1).